Consider the following 42-residue polypeptide: CAKKRNWCGKNEDCCCPMKCIYAWYNQQGSCQSTITGLFKKC.

4 disulfide bridges follow: Cys1-Cys15, Cys8-Cys20, Cys14-Cys31, and Cys16-Cys42.

It belongs to the neurotoxin 06 (delta-actx) family. As to expression, expressed by the venom gland.

It is found in the secreted. Its function is as follows. Inhibits tetrodotoxin-sensitive sodium channels by binding to site 3. It slows the inactivation, causes a prolongation of action potential duration resulting in repetitive firing in autonomic and motor nerve fibers. Does not depolarize the resting potential. Does not affect tetrodotoxin-resistant sodium channels. This lethal neurotoxin is active on both insect and mammalian voltage-gated sodium channels (Nav). The sequence is that of Delta-hexatoxin-Iw1a from Illawarra wisharti (Illawarra funnel-web spider).